A 208-amino-acid chain; its full sequence is MSNEPPPPYPGGPTAPLLEEKSGAPLTPGRTSPAVMQPPPGMPLPSADIAPPPYEPPGQPVPQPGFVPPHMNADGTYMPAGFYPPPGPHPPMGYYPPGPYPPGPYPGPGGHTATVLVPSGAATTVTVLQGEIFEGAPVQTVCPHCQQAITTKISYEIGLMNFVLGFFCCFMGCDLGCCLIPCLINDFKDVTHTCPSCKAYICTYKRLC.

2 stretches are compositionally biased toward pro residues: residues 1–13 and 50–67; these read MSNE…PGGP and APPP…PGFV. The interval 1–70 is disordered; the sequence is MSNEPPPPYP…VPQPGFVPPH (70 aa). The 85-residue stretch at 122–206 folds into the LITAF domain; sequence ATTVTVLQGE…CKAYICTYKR (85 aa). Cys-142 and Cys-145 together coordinate Zn(2+). The segment at 164–184 is membrane-binding amphipathic helix; it reads LGFFCCFMGCDLGCCLIPCLI. Positions 194 and 197 each coordinate Zn(2+).

This sequence belongs to the CDIP1/LITAF family.

Its subcellular location is the late endosome membrane. It is found in the lysosome membrane. In terms of biological role, acts as an important p53/TP53-apoptotic effector. Regulates TNF-alpha-mediated apoptosis in a p53/TP53-dependent manner. The polypeptide is Cell death-inducing p53-target protein 1 (Cdip1) (Mus musculus (Mouse)).